The primary structure comprises 258 residues: SufE-like protein 2, chloroplastic (258 aa).

A disordered region spans residues 1–32; that stretch reads MNTSSSFKALASPPLISTSRPTTKSFPNPRFT. The span at 15–32 shows a compositional bias: polar residues; sequence LISTSRPTTKSFPNPRFT. C122 serves as the catalytic Cysteine persulfide intermediate.

Belongs to the SufE family. In terms of tissue distribution, highly expressed in flowers and pollen, and at low levels in roots, leaves and stems.

It localises to the plastid. The protein resides in the chloroplast. The protein operates within cofactor biosynthesis; iron-sulfur cluster biosynthesis. Its function is as follows. Participates in cysteine desulfurization mediated by NFS2. Can activate the cysteine desulfurase activity of NFS2 in vitro. Cysteine desulfurization mobilizes sulfur from L-cysteine to yield L-alanine and supplies the inorganic sulfur for iron-sulfur (Fe-S) cluster formation. In Arabidopsis thaliana (Mouse-ear cress), this protein is SufE-like protein 2, chloroplastic (SUFE2).